Consider the following 205-residue polypeptide: Cytochrome c biogenesis ATP-binding export protein CcmA (205 aa).

The region spanning 2-204 (LEVSNLTAIR…SPKLRKIKLG (203 aa)) is the ABC transporter domain. 34-41 (GRNGTGKT) contributes to the ATP binding site.

Belongs to the ABC transporter superfamily. CcmA exporter (TC 3.A.1.107) family. In terms of assembly, the complex is composed of two ATP-binding proteins (CcmA) and two transmembrane proteins (CcmB).

Its subcellular location is the cell inner membrane. It carries out the reaction heme b(in) + ATP + H2O = heme b(out) + ADP + phosphate + H(+). Its function is as follows. Part of the ABC transporter complex CcmAB involved in the biogenesis of c-type cytochromes; once thought to export heme, this seems not to be the case, but its exact role is uncertain. Responsible for energy coupling to the transport system. In Vibrio vulnificus (strain YJ016), this protein is Cytochrome c biogenesis ATP-binding export protein CcmA.